A 116-amino-acid polypeptide reads, in one-letter code: Large ribosomal subunit protein uL18 (116 aa).

The protein belongs to the universal ribosomal protein uL18 family. In terms of assembly, part of the 50S ribosomal subunit; part of the 5S rRNA/L5/L18/L25 subcomplex. Contacts the 5S and 23S rRNAs.

Functionally, this is one of the proteins that bind and probably mediate the attachment of the 5S RNA into the large ribosomal subunit, where it forms part of the central protuberance. The polypeptide is Large ribosomal subunit protein uL18 (Shewanella baltica (strain OS223)).